The following is a 219-amino-acid chain: Nodulation protein NolA (219 aa).

In terms of domain architecture, HTH merR-type spans 10 to 79; it reads RWRIGELAEA…LHEIRKAMEG (70 aa). The H-T-H motif DNA-binding region spans 13–32; it reads IGELAEATGVTVRTLHHYEH.

Its function is as follows. Involved in genotype-specific nodulation of soybeans. The protein is Nodulation protein NolA (nolA) of Bradyrhizobium elkanii.